Consider the following 173-residue polypeptide: RNA pyrophosphohydrolase (173 aa).

In terms of domain architecture, Nudix hydrolase spans 6–149 (GFRANVGIIL…KRGVYRRALQ (144 aa)). The Nudix box signature appears at 38-59 (GGIDRGETPMDAMYRELWEEVG).

This sequence belongs to the Nudix hydrolase family. RppH subfamily. It depends on a divalent metal cation as a cofactor.

In terms of biological role, accelerates the degradation of transcripts by removing pyrophosphate from the 5'-end of triphosphorylated RNA, leading to a more labile monophosphorylated state that can stimulate subsequent ribonuclease cleavage. This is RNA pyrophosphohydrolase from Psychrobacter arcticus (strain DSM 17307 / VKM B-2377 / 273-4).